The chain runs to 407 residues: Arylacetamide deacetylase-like 4 family member 1 (407 aa).

Topologically, residues 1–4 (MLYL) are cytoplasmic. The helical; Signal-anchor for type II membrane protein transmembrane segment at 5–25 (VGFLLATVCLLVLGVNVWVLI) threads the bilayer. Residues 26–407 (DHFLTIDVPP…NAVVSYIKDL (382 aa)) are Lumenal-facing. An Involved in the stabilization of the negatively charged intermediate by the formation of the oxyanion hole motif is present at residues 119 to 121 (HGG). An N-linked (GlcNAc...) asparagine glycan is attached at N168. Residues S193, D347, and H377 contribute to the active site.

This sequence belongs to the 'GDXG' lipolytic enzyme family.

It localises to the membrane. The polypeptide is Arylacetamide deacetylase-like 4 family member 1 (Mus musculus (Mouse)).